Here is a 1190-residue protein sequence, read N- to C-terminus: DNA-directed RNA polymerase subunit beta (1190 aa).

Belongs to the RNA polymerase beta chain family. As to quaternary structure, the RNAP catalytic core consists of 2 alpha, 1 beta, 1 beta' and 1 omega subunit. When a sigma factor is associated with the core the holoenzyme is formed, which can initiate transcription.

The catalysed reaction is RNA(n) + a ribonucleoside 5'-triphosphate = RNA(n+1) + diphosphate. DNA-dependent RNA polymerase catalyzes the transcription of DNA into RNA using the four ribonucleoside triphosphates as substrates. The sequence is that of DNA-directed RNA polymerase subunit beta from Streptococcus suis (strain 98HAH33).